Consider the following 232-residue polypeptide: Urease accessory protein UreF (232 aa).

It belongs to the UreF family. In terms of assembly, ureD, UreF and UreG form a complex that acts as a GTP-hydrolysis-dependent molecular chaperone, activating the urease apoprotein by helping to assemble the nickel containing metallocenter of UreC. The UreE protein probably delivers the nickel.

The protein resides in the cytoplasm. Its function is as follows. Required for maturation of urease via the functional incorporation of the urease nickel metallocenter. This chain is Urease accessory protein UreF, found in Azorhizobium caulinodans (strain ATCC 43989 / DSM 5975 / JCM 20966 / LMG 6465 / NBRC 14845 / NCIMB 13405 / ORS 571).